A 299-amino-acid chain; its full sequence is Ribonuclease H2 subunit A (299 aa).

Met-1 is subject to N-acetylmethionine. The RNase H type-2 domain maps to 28–251 (PCVLGVDEAG…AQSILESEAE (224 aa)). A divalent metal cation is bound by residues Asp-34, Glu-35, and Asp-142. Thr-205 and Thr-217 each carry phosphothreonine. Residues 250–272 (AEDVKWEDSETGDPKGPGKIKSY) are disordered. At Ser-258 the chain carries Phosphoserine.

Belongs to the RNase HII family. Eukaryotic subfamily. The RNase H2 complex is a heterotrimer composed of the catalytic subunit RNASEH2A and the non-catalytic subunits RNASEH2B and RNASEH2C. The cofactor is Mn(2+). Mg(2+) serves as cofactor.

The protein resides in the nucleus. The catalysed reaction is Endonucleolytic cleavage to 5'-phosphomonoester.. In terms of biological role, catalytic subunit of RNase HII, an endonuclease that specifically degrades the RNA of RNA:DNA hybrids. Participates in DNA replication, possibly by mediating the removal of lagging-strand Okazaki fragment RNA primers during DNA replication. Mediates the excision of single ribonucleotides from DNA:RNA duplexes. The sequence is that of Ribonuclease H2 subunit A (RNASEH2A) from Bos taurus (Bovine).